Consider the following 82-residue polypeptide: Putative membrane protein insertion efficiency factor (82 aa).

This sequence belongs to the UPF0161 family.

It localises to the cell inner membrane. Its function is as follows. Could be involved in insertion of integral membrane proteins into the membrane. In Colwellia psychrerythraea (strain 34H / ATCC BAA-681) (Vibrio psychroerythus), this protein is Putative membrane protein insertion efficiency factor.